The following is a 294-amino-acid chain: Probable 2-(5''-triphosphoribosyl)-3'-dephosphocoenzyme-A synthase (294 aa).

It belongs to the CitG/MdcB family.

The enzyme catalyses 3'-dephospho-CoA + ATP = 2'-(5''-triphospho-alpha-D-ribosyl)-3'-dephospho-CoA + adenine. The chain is Probable 2-(5''-triphosphoribosyl)-3'-dephosphocoenzyme-A synthase from Streptococcus pyogenes serotype M2 (strain MGAS10270).